Reading from the N-terminus, the 177-residue chain is Large ribosomal subunit protein uL16 (177 aa).

It belongs to the universal ribosomal protein uL16 family.

This Natronomonas pharaonis (strain ATCC 35678 / DSM 2160 / CIP 103997 / JCM 8858 / NBRC 14720 / NCIMB 2260 / Gabara) (Halobacterium pharaonis) protein is Large ribosomal subunit protein uL16.